Here is a 184-residue protein sequence, read N- to C-terminus: Shikimate kinase (184 aa).

17 to 22 provides a ligand contact to ATP; it reads GAGKTT. Mg(2+) is bound at residue threonine 21. Positions 39, 63, and 85 each coordinate substrate. Arginine 123 lines the ATP pocket. Arginine 142 serves as a coordination point for substrate.

Belongs to the shikimate kinase family. As to quaternary structure, monomer. Mg(2+) serves as cofactor.

The protein resides in the cytoplasm. The catalysed reaction is shikimate + ATP = 3-phosphoshikimate + ADP + H(+). It participates in metabolic intermediate biosynthesis; chorismate biosynthesis; chorismate from D-erythrose 4-phosphate and phosphoenolpyruvate: step 5/7. Catalyzes the specific phosphorylation of the 3-hydroxyl group of shikimic acid using ATP as a cosubstrate. The protein is Shikimate kinase of Burkholderia thailandensis (strain ATCC 700388 / DSM 13276 / CCUG 48851 / CIP 106301 / E264).